A 93-amino-acid chain; its full sequence is Large ribosomal subunit protein uL23cz/uL23cy (93 aa).

It belongs to the universal ribosomal protein uL23 family. As to quaternary structure, part of the 50S ribosomal subunit.

The protein resides in the plastid. The protein localises to the chloroplast. In terms of biological role, binds to 23S rRNA. This is Large ribosomal subunit protein uL23cz/uL23cy (rpl23-A) from Citrus sinensis (Sweet orange).